The primary structure comprises 872 residues: Alanine--tRNA ligase (872 aa).

Zn(2+) is bound by residues histidine 567, histidine 571, cysteine 669, and histidine 673.

This sequence belongs to the class-II aminoacyl-tRNA synthetase family. The cofactor is Zn(2+).

The protein localises to the cytoplasm. The catalysed reaction is tRNA(Ala) + L-alanine + ATP = L-alanyl-tRNA(Ala) + AMP + diphosphate. Its function is as follows. Catalyzes the attachment of alanine to tRNA(Ala) in a two-step reaction: alanine is first activated by ATP to form Ala-AMP and then transferred to the acceptor end of tRNA(Ala). Also edits incorrectly charged Ser-tRNA(Ala) and Gly-tRNA(Ala) via its editing domain. The sequence is that of Alanine--tRNA ligase from Streptococcus pyogenes serotype M5 (strain Manfredo).